A 203-amino-acid chain; its full sequence is Thymidylate kinase (203 aa).

Gly-10–Thr-17 is a binding site for ATP.

The protein belongs to the thymidylate kinase family.

The enzyme catalyses dTMP + ATP = dTDP + ADP. Its function is as follows. Phosphorylation of dTMP to form dTDP in both de novo and salvage pathways of dTTP synthesis. The polypeptide is Thymidylate kinase (Carboxydothermus hydrogenoformans (strain ATCC BAA-161 / DSM 6008 / Z-2901)).